The following is a 360-amino-acid chain: Threonine synthase (360 aa).

N6-(pyridoxal phosphate)lysine is present on lysine 69. Residues asparagine 95, 196 to 200 (GNAGN), and threonine 326 contribute to the pyridoxal 5'-phosphate site.

Belongs to the threonine synthase family. As to quaternary structure, homodimer. Pyridoxal 5'-phosphate is required as a cofactor.

It carries out the reaction O-phospho-L-homoserine + H2O = L-threonine + phosphate. The protein operates within amino-acid biosynthesis; L-threonine biosynthesis; L-threonine from L-aspartate: step 5/5. In terms of biological role, catalyzes the gamma-elimination of phosphate from L-phosphohomoserine and the beta-addition of water to produce L-threonine. In Mycobacterium leprae (strain TN), this protein is Threonine synthase (thrC).